We begin with the raw amino-acid sequence, 538 residues long: Protein phosphatase EYA2 (538 aa).

The span at 209 to 230 (HNVPNQSSESLAGEYNTHNGPS) shows a compositional bias: polar residues. Residues 209–263 (HNVPNQSSESLAGEYNTHNGPSTPAKEGDTDRPHRASDGKLRGRSKRSSDPSPAG) are disordered. A compositionally biased stretch (basic and acidic residues) spans 234–249 (KEGDTDRPHRASDGKL). The active-site Nucleophile is the D274. Residues D274, D276, and D502 each coordinate Mg(2+). Catalysis depends on D276, which acts as the Proton donor.

The protein belongs to the HAD-like hydrolase superfamily. EYA family. Interacts with DACH2 and SIX1, and probably with SIX2, SIX4 and SIX5. Interacts with CAPN8. Interacts with GNAZ and GNAI2; this precludes interaction with SIX1. The cofactor is Mg(2+). As to expression, highest expression in muscle with lower levels in kidney, placenta, pancreas, brain and heart.

Its subcellular location is the cytoplasm. It is found in the nucleus. It catalyses the reaction O-phospho-L-tyrosyl-[protein] + H2O = L-tyrosyl-[protein] + phosphate. In terms of biological role, functions both as protein phosphatase and as transcriptional coactivator for SIX1, and probably also for SIX2, SIX4 and SIX5. Tyrosine phosphatase that dephosphorylates 'Tyr-142' of histone H2AX (H2AXY142ph) and promotes efficient DNA repair via the recruitment of DNA repair complexes containing MDC1. 'Tyr-142' phosphorylation of histone H2AX plays a central role in DNA repair and acts as a mark that distinguishes between apoptotic and repair responses to genotoxic stress. Its function as histone phosphatase may contribute to its function in transcription regulation during organogenesis. Plays an important role in hypaxial muscle development together with SIX1 and DACH2; in this it is functionally redundant with EYA1. In Homo sapiens (Human), this protein is Protein phosphatase EYA2 (EYA2).